Consider the following 1435-residue polypeptide: Dicer-like protein 2 (1435 aa).

A Helicase ATP-binding domain is found at 54-234 (MLSESLRQNI…LEVLEINLNA (181 aa)). 67-74 (MDTGSGKT) lines the ATP pocket. A DEAH box motif is present at residues 175–178 (DEAH). The region spanning 400–564 (KLIDFLVLEH…ENKRALEHIQ (165 aa)) is the Helicase C-terminal domain. Positions 591–684 (ARNHLSHFCG…MPAHHHIDDE (94 aa)) constitute a Dicer dsRNA-binding fold domain. RNase III domains follow at residues 956 to 1099 (ANEL…IDGG) and 1141 to 1323 (LSEI…IDSQ). Mg(2+) contacts are provided by Glu1178, Asp1309, and Glu1312.

It belongs to the helicase family. Dicer subfamily. Mg(2+) serves as cofactor. The cofactor is Mn(2+).

Dicer-like endonuclease involved in cleaving double-stranded RNA in the RNA interference (RNAi) pathway. Produces 21 to 25 bp dsRNAs (siRNAs) which target the selective destruction of homologous RNAs leading to sequence-specific suppression of gene expression, called post-transcriptional gene silencing (PTGS). Part of a broad host defense response against viral infection and transposons. The protein is Dicer-like protein 2 (DCL2) of Coccidioides immitis (strain RS) (Valley fever fungus).